An 876-amino-acid chain; its full sequence is Valine--tRNA ligase (876 aa).

A 'HIGH' region motif is present at residues 44 to 54 (PNVTGKLHLGH). Residues 520 to 524 (KMSKS) carry the 'KMSKS' region motif. Position 523 (Lys-523) interacts with ATP. Residues 805 to 876 (LEGLIDMDKE…VKARIEQLKA (72 aa)) adopt a coiled-coil conformation.

Belongs to the class-I aminoacyl-tRNA synthetase family. ValS type 1 subfamily. In terms of assembly, monomer.

Its subcellular location is the cytoplasm. It catalyses the reaction tRNA(Val) + L-valine + ATP = L-valyl-tRNA(Val) + AMP + diphosphate. In terms of biological role, catalyzes the attachment of valine to tRNA(Val). As ValRS can inadvertently accommodate and process structurally similar amino acids such as threonine, to avoid such errors, it has a 'posttransfer' editing activity that hydrolyzes mischarged Thr-tRNA(Val) in a tRNA-dependent manner. This chain is Valine--tRNA ligase, found in Staphylococcus aureus (strain MRSA252).